Reading from the N-terminus, the 127-residue chain is MAYRKLGRTSSQRKAMLRDLTTDLLINGRITTTEARAKEVRKTTDKMITLGKRGDLNARRQAATFVRNEVADVIEDGDDVKVQSALQKLFDDVAPRFAERNGGYTRILKTVQRRGDAAQLVILELVD.

The protein belongs to the bacterial ribosomal protein bL17 family. Part of the 50S ribosomal subunit. Contacts protein L32.

This chain is Large ribosomal subunit protein bL17, found in Leuconostoc mesenteroides subsp. mesenteroides (strain ATCC 8293 / DSM 20343 / BCRC 11652 / CCM 1803 / JCM 6124 / NCDO 523 / NBRC 100496 / NCIMB 8023 / NCTC 12954 / NRRL B-1118 / 37Y).